The chain runs to 125 residues: Putative superoxide reductase (125 aa).

Fe cation contacts are provided by Glu-12, His-14, His-40, His-46, Cys-110, and His-113.

It belongs to the desulfoferrodoxin family. Requires Fe cation as cofactor.

It catalyses the reaction reduced [rubredoxin] + superoxide + 2 H(+) = oxidized [rubredoxin] + H2O2. Functionally, uses electrons from reduced NADP, by way of rubredoxin and an oxidoreductase, to catalyze the reduction of superoxide to hydrogen peroxide. This is Putative superoxide reductase from Archaeoglobus fulgidus (strain ATCC 49558 / DSM 4304 / JCM 9628 / NBRC 100126 / VC-16).